A 194-amino-acid chain; its full sequence is Calcium-binding protein J (194 aa).

2 consecutive EF-hand domains span residues 62–97 (WDKD…MTKA) and 98–133 (PVVE…AVAC). Asp-75, Asp-77, Asn-79, Glu-86, Asp-111, Asp-113, Ser-115, His-117, and Glu-122 together coordinate Ca(2+).

This sequence belongs to the recoverin family.

This chain is Calcium-binding protein J (cbpJ), found in Dictyostelium discoideum (Social amoeba).